The sequence spans 326 residues: Cytosolic sulfotransferase 7 (326 aa).

Residue 72 to 77 (KSGTTW) participates in 3'-phosphoadenylyl sulfate binding. His-138 serves as the catalytic Proton acceptor. 3'-phosphoadenylyl sulfate-binding positions include Arg-160, Ser-168, Tyr-226, and 292–294 (RKG).

It belongs to the sulfotransferase 1 family.

The protein resides in the cytoplasm. Sulfotransferase that utilizes 3'-phospho-5'-adenylyl sulfate (PAPS) as sulfonate donor. This is Cytosolic sulfotransferase 7 (SOT7) from Arabidopsis thaliana (Mouse-ear cress).